The sequence spans 674 residues: Sterile alpha motif domain-containing protein 15 (674 aa).

The span at 1-18 shows a compositional bias: acidic residues; the sequence is MAEVPEDYDSGPDEDGEL. Residues 1–448 form a disordered region; that stretch reads MAEVPEDYDS…LEHREPKRGK (448 aa). Basic and acidic residues-rich tracts occupy residues 87–142, 195–223, and 236–274; these read IAKE…EEAK, ESLRVQHEETGLEPPEQTKQDFPSEKLGE, and TKPETPEETQRESTEKKRTEPPEQARLEFLEKEPRKSSE. Residues 276–290 show a composition bias toward acidic residues; sequence AGLEPPEETQPEVPE. 4 stretches are compositionally biased toward basic and acidic residues: residues 291-322, 330-346, 354-372, and 391-429; these read EMQRKATEEKGTELPERTKPDFPDHKPRKSTD, EEIKLEFPEEESRKTNE, EMMKPESPEEIRKSNEKKN, and VEEKTQTKPTEKILELPDETKPRETHVEFSKEDRPEPIK. One can recognise an SAM domain in the interval 545 to 608; the sequence is WDPEEVAEWI…SRHTQELLEI (64 aa).

This chain is Sterile alpha motif domain-containing protein 15 (SAMD15), found in Homo sapiens (Human).